The sequence spans 150 residues: 3-hydroxyacyl-[acyl-carrier-protein] dehydratase FabZ (150 aa).

The active site involves His52.

It belongs to the thioester dehydratase family. FabZ subfamily.

The protein localises to the cytoplasm. It carries out the reaction a (3R)-hydroxyacyl-[ACP] = a (2E)-enoyl-[ACP] + H2O. Its function is as follows. Involved in unsaturated fatty acids biosynthesis. Catalyzes the dehydration of short chain beta-hydroxyacyl-ACPs and long chain saturated and unsaturated beta-hydroxyacyl-ACPs. The protein is 3-hydroxyacyl-[acyl-carrier-protein] dehydratase FabZ of Variovorax paradoxus (strain S110).